Here is a 744-residue protein sequence, read N- to C-terminus: 5-methyltetrahydropteroyltriglutamate--homocysteine methyltransferase (744 aa).

5-methyltetrahydropteroyltri-L-glutamate contacts are provided by residues 17–20 (REVK) and K110. Residues 422-424 (IGS) and E475 each bind L-homocysteine. L-methionine contacts are provided by residues 422–424 (IGS) and E475. W552 contacts 5-methyltetrahydropteroyltri-L-glutamate. D590 is a binding site for L-homocysteine. D590 lines the L-methionine pocket. A 5-methyltetrahydropteroyltri-L-glutamate-binding site is contributed by E596. 3 residues coordinate Zn(2+): H632, C634, and E656. Catalysis depends on H685, which acts as the Proton donor. C717 contacts Zn(2+).

Belongs to the vitamin-B12 independent methionine synthase family. The cofactor is Zn(2+).

The catalysed reaction is 5-methyltetrahydropteroyltri-L-glutamate + L-homocysteine = tetrahydropteroyltri-L-glutamate + L-methionine. The protein operates within amino-acid biosynthesis; L-methionine biosynthesis via de novo pathway; L-methionine from L-homocysteine (MetE route): step 1/1. Its function is as follows. Catalyzes the transfer of a methyl group from 5-methyltetrahydrofolate to homocysteine resulting in methionine formation. The sequence is that of 5-methyltetrahydropteroyltriglutamate--homocysteine methyltransferase from Trichodesmium erythraeum (strain IMS101).